The following is a 544-amino-acid chain: Membrane protein insertase YidC (544 aa).

A helical membrane pass occupies residues asparagine 6–aspartate 26. A disordered region spans residues serine 112–threonine 132. 4 helical membrane-spanning segments follow: residues lysine 343–valine 363, leucine 418–leucine 438, leucine 456–isoleucine 476, and proline 497–valine 517.

This sequence belongs to the OXA1/ALB3/YidC family. Type 1 subfamily. In terms of assembly, interacts with the Sec translocase complex via SecD. Specifically interacts with transmembrane segments of nascent integral membrane proteins during membrane integration.

The protein resides in the cell inner membrane. Required for the insertion and/or proper folding and/or complex formation of integral membrane proteins into the membrane. Involved in integration of membrane proteins that insert both dependently and independently of the Sec translocase complex, as well as at least some lipoproteins. Aids folding of multispanning membrane proteins. The sequence is that of Membrane protein insertase YidC from Pectobacterium carotovorum subsp. carotovorum (strain PC1).